The following is a 1094-amino-acid chain: Potassium-transporting ATPase alpha chain 2 (1094 aa).

A compositionally biased stretch (basic and acidic residues) spans 1-21 (MAGGAHRADRATGEERKEGGG). Residues 1-37 (MAGGAHRADRATGEERKEGGGRWRAPHSPSPPGPRGC) form a disordered region. Residues 28 to 37 (SPSPPGPRGC) are compositionally biased toward pro residues. The Cytoplasmic portion of the chain corresponds to 56-157 (RYCTLLLFQR…NALTPPKQTP (102 aa)). The helical transmembrane segment at 158-178 (EIIKFLKQMVGGFSILLWVGA) threads the bilayer. Residues 179 to 201 (VLCWIAFGIQYVSNPSASLDRVY) lie on the Lumenal side of the membrane. A helical membrane pass occupies residues 202 to 222 (LGTVLAVVVILTGIFAYYQEA). Residues 223-358 (KSTNIMASFC…NEKTPIAIEI (136 aa)) lie on the Cytoplasmic side of the membrane. Residues 286 to 305 (SSLTGESEPQSRSSGFTHEN) form a disordered region. Residues 359–378 (EHFVHIVAGVAVSVGILFFI) form a helical membrane-spanning segment. The Lumenal segment spans residues 379-390 (IAVCMKYHVLDA). Residues 391 to 408 (IIFLIAIIVANVPEGLLA) form a helical membrane-spanning segment. Residues 409-842 (TVTVALSLTA…EEGRLIFDNL (434 aa)) lie on the Cytoplasmic side of the membrane. Aspartate 446 serves as the catalytic 4-aspartylphosphate intermediate. Mg(2+) is bound by residues aspartate 787 and aspartate 791. Residues 843-862 (KKTIAYTLTKNIAELCPFLI) form a helical membrane-spanning segment. The Lumenal portion of the chain corresponds to 863 to 872 (YIILGLPLPI). The helical transmembrane segment at 873–893 (GTITLLFIDLGTDIIPSIALA) threads the bilayer. Residues 894-913 (YEKAESDIMNRKPRHKKKDR) are Cytoplasmic-facing. A helical transmembrane segment spans residues 914–936 (LVNQQLAVYSYLHIGLMQALGAF). The Lumenal segment spans residues 937–988 (LVYFTVYAQQGFRPTSLFHLRIAWDSDHLNDLEDNYGQEWTSYQRQYLEWTG). Residues 989 to 1008 (YTAFFVGIMVQQIADLIIRK) form a helical membrane-spanning segment. The Cytoplasmic segment spans residues 1009 to 1022 (TRKNSIFKQGLFRN). Serine 1013 bears the Phosphoserine; by PKA mark. A helical transmembrane segment spans residues 1023-1041 (KVIWVGIASQIIVALLLSY). At 1042–1056 (GLGSITALNFTMLKA) the chain is on the lumenal side. A helical transmembrane segment spans residues 1057 to 1077 (QYWFVAVPHAILIWVYDEMRK). Over 1078-1094 (LFIRLYPGSWWDKNMYY) the chain is Cytoplasmic.

The protein belongs to the cation transport ATPase (P-type) (TC 3.A.3) family. Type IIC subfamily. As to quaternary structure, the X(+)/K(+) ATPase pump is composed of a catalytic alpha subunit and an auxiliary non-catalytic beta subunit. The alpha subunit pairs with the beta subunit of gastric H(+)/K(+) ATPase ATP4B or the beta subunit of Na(+)/K(+) ATPases ATP1B1 and ATP1B3; this interaction is required for the formation of a functionally active pump and its targeting at the plasma membrane. Found in the skin, kidney, distal colon and brain. In the kidney it is found in the connecting tubule, cortical collecting duct and outer medullary collecting duct while in the brain it is specific to choroid plexus and cortex.

The protein localises to the apical cell membrane. The catalysed reaction is K(+)(out) + ATP + H2O + H(+)(in) = K(+)(in) + ADP + phosphate + 2 H(+)(out). It catalyses the reaction K(+)(out) + Na(+)(in) + ATP + H2O = K(+)(in) + Na(+)(out) + ADP + phosphate + H(+). The catalytic subunit of a H(+)/K(+) ATPase and/or Na(+)/K(+) ATPase pump which transports K(+) ions in exchange for Na(+) and/or H(+) ions across the apical membrane of epithelial cells. Uses ATP as an energy source to pump K(+) ions into the cell while transporting Na(+) and/or H(+) ions to the extracellular compartment. Involved in the maintenance of electrolyte homeostasis through K(+) ion absorption in kidney and colon. In the airway epithelium, may play a primary role in mucus acidification regulating its viscosity and clearance. The polypeptide is Potassium-transporting ATPase alpha chain 2 (ATP12A) (Oryctolagus cuniculus (Rabbit)).